A 396-amino-acid chain; its full sequence is GDSL esterase/lipase ACHE (396 aa).

Positions 1 to 31 (MATAATATAGSRAAVLLLLSLALALALRPSD) are cleaved as a signal peptide. The Nucleophile role is filled by serine 49. N-linked (GlcNAc...) asparagine glycosylation is found at asparagine 108, asparagine 126, asparagine 151, asparagine 196, and asparagine 339. Catalysis depends on residues aspartate 359 and histidine 362.

Belongs to the 'GDSL' lipolytic enzyme family.

The protein localises to the secreted. In terms of biological role, esterase that can hydrolyze acetylthiocholine and propionylthiocholine in vitro. Substrate preference is propionylthiocholine &gt; acetylthiocholine. Possesses extremely low activity against butyrylthiocholine. This chain is GDSL esterase/lipase ACHE, found in Zea mays (Maize).